The following is a 519-amino-acid chain: Membrane-bound glycerophospholipid O-acyltransferase 2 (519 aa).

A run of 6 helical transmembrane segments spans residues Pro22–Phe42, Thr61–Val81, Cys88–Gly108, Phe184–Gly204, Leu236–Glu256, and Phe263–Ala283. Catalysis depends on residues Asn341 and His372. 3 helical membrane-spanning segments follow: residues Phe365–Gly385, Leu415–Leu435, and Phe443–Pro463. Residues Phe497 to Gln519 are disordered.

The protein belongs to the membrane-bound acyltransferase family. As to expression, highly expressed in epididymis, brain, testis, and ovary.

The protein resides in the endoplasmic reticulum membrane. The catalysed reaction is a 1-acyl-sn-glycero-3-phosphocholine + an acyl-CoA = a 1,2-diacyl-sn-glycero-3-phosphocholine + CoA. It catalyses the reaction a 1-acyl-sn-glycero-3-phosphoethanolamine + an acyl-CoA = a 1,2-diacyl-sn-glycero-3-phosphoethanolamine + CoA. The enzyme catalyses a 1-O-(1Z-alkenyl)-sn-glycero-3-phosphocholine + (9Z)-octadecenoyl-CoA = 1-O-(1Z)-alkenyl-2-(9Z)-octadecenoyl-sn-glycero-3-phosphocholine + CoA. It carries out the reaction a 1-O-(1Z-alkenyl)-sn-glycero-3-phosphoethanolamine + (9Z)-octadecenoyl-CoA = 1-O-(1Z)-alkenyl-2-(9Z)-octadecenoyl-sn-glycero-3-phosphoethanolamine + CoA. The catalysed reaction is 1-octadecanoyl-sn-glycero-3-phosphoethanolamine + (9Z)-octadecenoyl-CoA = 1-octadecanoyl-2-(9Z-octadecenoyl)-sn-glycero-3-phosphoethanolamine + CoA. It catalyses the reaction 1-octadecanoyl-sn-glycero-3-phosphocholine + (9Z)-octadecenoyl-CoA = 1-octadecanoyl-2-(9Z-octadecenoyl)-sn-glycero-3-phosphocholine + CoA. The enzyme catalyses 1-(9Z-octadecenoyl)-sn-glycero-3-phosphoethanolamine + (9Z)-octadecenoyl-CoA = 1,2-di-(9Z-octadecenoyl)-sn-glycero-3-phosphoethanolamine + CoA. It carries out the reaction 1-hexadecanoyl-sn-glycero-3-phosphoethanolamine + (9Z)-octadecenoyl-CoA = 1-hexadecanoyl-2-(9Z-octadecenoyl)-sn-glycero-3-phosphoethanolamine + CoA. The catalysed reaction is 1-hexadecanoyl-sn-glycero-3-phosphocholine + (9Z)-octadecenoyl-CoA = 1-hexadecanoyl-2-(9Z-octadecenoyl)-sn-glycero-3-phosphocholine + CoA. It catalyses the reaction (9Z)-hexadecenoyl-CoA + 1-hexadecanoyl-sn-glycero-3-phosphocholine = 1-hexadecanoyl-2-(9Z-hexadecenoyl)-sn-glycero-3-phosphocholine + CoA. The enzyme catalyses 1-hexadecanoyl-sn-glycero-3-phosphoethanolamine + (9Z)-hexadecenoyl-CoA = 1-hexadecanoyl-2-(9Z)-hexadecenoyl-sn-glycero-3-phosphoethanolamine + CoA. It carries out the reaction (9Z,12Z)-octadecadienoyl-CoA + 1-hexadecanoyl-sn-glycero-3-phosphocholine = 1-hexadecanoyl-2-(9Z,12Z-octadecadienoyl)-sn-glycero-3-phosphocholine + CoA. The protein operates within lipid metabolism; phospholipid metabolism. Partially inhibited by thimerosal. Its function is as follows. Acyltransferase which catalyzes the transfer of an acyl group from an acyl-CoA to a lysophospholipid leading to the production of a phospholipid and participates in the reacylation step of the phospholipid remodeling pathway also known as the Lands cycle. Catalyzes the acylation of lysophosphatidylcholine (1-acyl-sn-glycero-3-phosphocholine or LPC) and to a lesser extend lysophosphatidylethanolamine (1-acyl-sn-glycero-3-phosphoethanolamine or LPE). Does not acylates lysophosphatidic acid (LPA) and lysophosphatidylserine. Prefers oleoyl-CoA as the acyl donor. May be involved in chondrocyte differentiation. This chain is Membrane-bound glycerophospholipid O-acyltransferase 2, found in Mus musculus (Mouse).